Reading from the N-terminus, the 219-residue chain is Protein-L-isoaspartate O-methyltransferase 1 (219 aa).

Ser-67 is an active-site residue.

The protein belongs to the methyltransferase superfamily. L-isoaspartyl/D-aspartyl protein methyltransferase family.

Its subcellular location is the cytoplasm. It catalyses the reaction [protein]-L-isoaspartate + S-adenosyl-L-methionine = [protein]-L-isoaspartate alpha-methyl ester + S-adenosyl-L-homocysteine. Functionally, catalyzes the methyl esterification of L-isoaspartyl residues in peptides and proteins that result from spontaneous decomposition of normal L-aspartyl and L-asparaginyl residues. It plays a role in the repair and/or degradation of damaged proteins. The polypeptide is Protein-L-isoaspartate O-methyltransferase 1 (Geotalea uraniireducens (strain Rf4) (Geobacter uraniireducens)).